We begin with the raw amino-acid sequence, 300 residues long: F-box/LRR-repeat protein 15 (300 aa).

M1 is modified (N-acetylmethionine). One can recognise an F-box domain in the interval F19–D66. Residues N113 to R269 are interaction with SMURF1. LRR repeat units follow at residues R141–A162, A167–A188, G194–A215, E220–A241, and V246–R267.

This sequence belongs to the FBXL15 family. Part of the SCF (SKP1-CUL1-F-box) E3 ubiquitin-protein ligase complex SCF(FBXL15) composed of CUL1, SKP1, RBX1 and FBXL15.

It localises to the cytoplasm. It functions in the pathway protein modification; protein ubiquitination. Functionally, substrate recognition component of a SCF (SKP1-CUL1-F-box protein) E3 ubiquitin-protein ligase complex which mediates the ubiquitination and subsequent proteasomal degradation of SMURF1, thereby acting as a positive regulator of the BMP signaling pathway. Required for dorsal/ventral pattern formation and bone mass maintenance. Also mediates ubiquitination of SMURF2 and WWP2. The polypeptide is F-box/LRR-repeat protein 15 (FBXL15) (Homo sapiens (Human)).